A 377-amino-acid polypeptide reads, in one-letter code: Trichodiene synthase (377 aa).

Belongs to the trichodiene synthase family.

It catalyses the reaction (2E,6E)-farnesyl diphosphate = trichodiene + diphosphate. The protein operates within sesquiterpene biosynthesis; trichothecene biosynthesis. Its function is as follows. TS is a member of the terpene cyclase group of enzymes. It catalyzes the isomerization and cyclization of farnesyl pyro-phosphate to form trichodiene, the first cyclic intermediate in the biosynthetic pathway for trichothecenes. It serves to branch trichothecene biosynthesis from the isoprenoid pathway. The chain is Trichodiene synthase (TRI5) from Fusarium poae.